We begin with the raw amino-acid sequence, 457 residues long: Bifunctional protein GlmU (457 aa).

Positions 1-229 are pyrophosphorylase; it reads MSNSAKSVVI…HSEMEGVNNR (229 aa). Residues 11–14, lysine 25, glutamine 76, 81–82, 103–105, glycine 140, glutamate 154, asparagine 169, and asparagine 227 contribute to the UDP-N-acetyl-alpha-D-glucosamine site; these read LAAG, GT, and YGD. Aspartate 105 contacts Mg(2+). Position 227 (asparagine 227) interacts with Mg(2+). Residues 230–250 are linker; that stretch reads LQLAALERIYQTEQAERLLLE. Residues 251 to 457 form an N-acetyltransferase region; it reads GVMLLDPARF…GWKRPVKKKQ (207 aa). Arginine 333 and lysine 351 together coordinate UDP-N-acetyl-alpha-D-glucosamine. Histidine 363 functions as the Proton acceptor in the catalytic mechanism. Positions 366 and 377 each coordinate UDP-N-acetyl-alpha-D-glucosamine. Acetyl-CoA is bound by residues alanine 380, 386–387, serine 405, alanine 423, and arginine 440; that span reads NY.

This sequence in the N-terminal section; belongs to the N-acetylglucosamine-1-phosphate uridyltransferase family. It in the C-terminal section; belongs to the transferase hexapeptide repeat family. As to quaternary structure, homotrimer. It depends on Mg(2+) as a cofactor.

It localises to the cytoplasm. It carries out the reaction alpha-D-glucosamine 1-phosphate + acetyl-CoA = N-acetyl-alpha-D-glucosamine 1-phosphate + CoA + H(+). The enzyme catalyses N-acetyl-alpha-D-glucosamine 1-phosphate + UTP + H(+) = UDP-N-acetyl-alpha-D-glucosamine + diphosphate. It participates in nucleotide-sugar biosynthesis; UDP-N-acetyl-alpha-D-glucosamine biosynthesis; N-acetyl-alpha-D-glucosamine 1-phosphate from alpha-D-glucosamine 6-phosphate (route II): step 2/2. It functions in the pathway nucleotide-sugar biosynthesis; UDP-N-acetyl-alpha-D-glucosamine biosynthesis; UDP-N-acetyl-alpha-D-glucosamine from N-acetyl-alpha-D-glucosamine 1-phosphate: step 1/1. Its pathway is bacterial outer membrane biogenesis; LPS lipid A biosynthesis. In terms of biological role, catalyzes the last two sequential reactions in the de novo biosynthetic pathway for UDP-N-acetylglucosamine (UDP-GlcNAc). The C-terminal domain catalyzes the transfer of acetyl group from acetyl coenzyme A to glucosamine-1-phosphate (GlcN-1-P) to produce N-acetylglucosamine-1-phosphate (GlcNAc-1-P), which is converted into UDP-GlcNAc by the transfer of uridine 5-monophosphate (from uridine 5-triphosphate), a reaction catalyzed by the N-terminal domain. This Proteus mirabilis (strain HI4320) protein is Bifunctional protein GlmU.